The following is a 295-amino-acid chain: Phosphatidylserine decarboxylase proenzyme (295 aa).

Catalysis depends on charge relay system; for autoendoproteolytic cleavage activity residues Asp90 and Ser258. The active-site Schiff-base intermediate with substrate; via pyruvic acid; for decarboxylase activity is the Ser258. Residue Ser258 is modified to Pyruvic acid (Ser); by autocatalysis.

It belongs to the phosphatidylserine decarboxylase family. PSD-B subfamily. Prokaryotic type I sub-subfamily. As to quaternary structure, heterodimer of a large membrane-associated beta subunit and a small pyruvoyl-containing alpha subunit. Requires pyruvate as cofactor. Post-translationally, is synthesized initially as an inactive proenzyme. Formation of the active enzyme involves a self-maturation process in which the active site pyruvoyl group is generated from an internal serine residue via an autocatalytic post-translational modification. Two non-identical subunits are generated from the proenzyme in this reaction, and the pyruvate is formed at the N-terminus of the alpha chain, which is derived from the carboxyl end of the proenzyme. The autoendoproteolytic cleavage occurs by a canonical serine protease mechanism, in which the side chain hydroxyl group of the serine supplies its oxygen atom to form the C-terminus of the beta chain, while the remainder of the serine residue undergoes an oxidative deamination to produce ammonia and the pyruvoyl prosthetic group on the alpha chain. During this reaction, the Ser that is part of the protease active site of the proenzyme becomes the pyruvoyl prosthetic group, which constitutes an essential element of the active site of the mature decarboxylase.

The protein localises to the cell membrane. The catalysed reaction is a 1,2-diacyl-sn-glycero-3-phospho-L-serine + H(+) = a 1,2-diacyl-sn-glycero-3-phosphoethanolamine + CO2. The protein operates within phospholipid metabolism; phosphatidylethanolamine biosynthesis; phosphatidylethanolamine from CDP-diacylglycerol: step 2/2. In terms of biological role, catalyzes the formation of phosphatidylethanolamine (PtdEtn) from phosphatidylserine (PtdSer). The protein is Phosphatidylserine decarboxylase proenzyme of Blochmanniella pennsylvanica (strain BPEN).